A 317-amino-acid polypeptide reads, in one-letter code: Ret finger protein-like 3 (317 aa).

The RING-type zinc-finger motif lies at 40-82 (CPVCSDYLEKPMSLECGCTVCLKCINSLQKEPHGEDLLCCCCS). The region spanning 107–301 (EPKLKKILQM…DQGVLSICPL (195 aa)) is the B30.2/SPRY domain.

Expressed during neurogenesis in differentiating human embryonic stem cells and in the developing human neocortex.

The protein resides in the cytoplasm. It localises to the nucleus. Functionally, (Microbial infection) Stimulates the activity of Human Immunodeficiency Virus 1/HIV-1 pre-integration complex. The sequence is that of Ret finger protein-like 3 (RFPL3) from Homo sapiens (Human).